A 356-amino-acid polypeptide reads, in one-letter code: UDP-N-acetylglucosamine--N-acetylmuramyl-(pentapeptide) pyrophosphoryl-undecaprenol N-acetylglucosamine transferase (356 aa).

The UDP-N-acetyl-alpha-D-glucosamine site is built by arginine 166, serine 196, and glutamine 290.

It belongs to the glycosyltransferase 28 family. MurG subfamily.

The protein resides in the cell membrane. The catalysed reaction is Mur2Ac(oyl-L-Ala-gamma-D-Glu-L-Lys-D-Ala-D-Ala)-di-trans,octa-cis-undecaprenyl diphosphate + UDP-N-acetyl-alpha-D-glucosamine = beta-D-GlcNAc-(1-&gt;4)-Mur2Ac(oyl-L-Ala-gamma-D-Glu-L-Lys-D-Ala-D-Ala)-di-trans,octa-cis-undecaprenyl diphosphate + UDP + H(+). It functions in the pathway cell wall biogenesis; peptidoglycan biosynthesis. Cell wall formation. Catalyzes the transfer of a GlcNAc subunit on undecaprenyl-pyrophosphoryl-MurNAc-pentapeptide (lipid intermediate I) to form undecaprenyl-pyrophosphoryl-MurNAc-(pentapeptide)GlcNAc (lipid intermediate II). In Staphylococcus aureus (strain USA300), this protein is UDP-N-acetylglucosamine--N-acetylmuramyl-(pentapeptide) pyrophosphoryl-undecaprenol N-acetylglucosamine transferase.